The primary structure comprises 206 residues: Transcription factor BTF3 (206 aa).

The interval 1 to 42 is disordered; sequence MRRTGAPAQADSRGRGRARGGCPGGEATLSQPPPRGGTRGQE. Residue Arg-19 is modified to Omega-N-methylarginine. At Ser-30 the chain carries Phosphoserine. Residues Lys-46 and Lys-54 each carry the N6-methyllysine modification. The NAC-A/B domain occupies 82-147; the sequence is TADDKKLQFS…AETKQLTEML (66 aa). Thr-160 carries the post-translational modification Phosphothreonine. A disordered region spans residues 170–206; that stretch reads PKQSVDGKAPLATGEDDDDEVPDLVENFDEASKNEAN. A Phosphoserine modification is found at Ser-173. The segment covering 183-198 has biased composition (acidic residues); that stretch reads GEDDDDEVPDLVENFD.

This sequence belongs to the NAC-beta family. In terms of assembly, part of the nascent polypeptide-associated complex (NAC), which is a heterodimer of NACA and BTF3 (via NAC-A/B domains). NAC associates with ribosomes through the BTF3/NACB subunit. Both subunits can contact nascent polypeptide chains.

The protein resides in the cytoplasm. It localises to the nucleus. In terms of biological role, when associated with NACA, prevents inappropriate targeting of non-secretory polypeptides to the endoplasmic reticulum (ER). Binds to nascent polypeptide chains as they emerge from the ribosome and blocks their interaction with the signal recognition particle (SRP), which normally targets nascent secretory peptides to the ER. BTF3 is also a general transcription factor that can form a stable complex with RNA polymerase II. Required for the initiation of transcription. The chain is Transcription factor BTF3 (BTF3) from Homo sapiens (Human).